A 481-amino-acid chain; its full sequence is E3 ubiquitin-protein ligase makorin-1 (481 aa).

C3H1-type zinc fingers lie at residues 55–82 (WTKQ…HDLS), 84–111 (SPYG…HSKP), and 208–235 (ETKK…HGDS). The makorin-type Cys-His stretch occupies residues 236–263 (CDMCGLQVLHPVDAAQRSQHIKSCIEAH). The segment at 281–335 (CGICMEVVYEKANPSERRFGILSNCNHTYCLKCIRKWRSAKQFESKIIKSCPECR) adopts an RING-type zinc-finger fold. The C3H1-type 4 zinc-finger motif lies at 364–393 (AMSNKACRYFDEGRGSCPFGGNCFYKHAYP).

Interacts with p53/TP53 and CDKN1A. Interacts with TERT, modulating telomere length homeostasis. Post-translationally, auto-ubiquitinated; which leads to proteasomal degradation. In terms of tissue distribution, highly expressed in embryo, in specific cell types of the central nervous system, in brain with the strongest levels of expression in the mantle layers and in testis. Moderate to low levels in somatic tissues.

It catalyses the reaction S-ubiquitinyl-[E2 ubiquitin-conjugating enzyme]-L-cysteine + [acceptor protein]-L-lysine = [E2 ubiquitin-conjugating enzyme]-L-cysteine + N(6)-ubiquitinyl-[acceptor protein]-L-lysine.. Its pathway is protein modification; protein ubiquitination. In terms of biological role, E3 ubiquitin ligase catalyzing the covalent attachment of ubiquitin moieties onto substrate proteins. These substrates include FILIP1, p53/TP53, CDKN1A and TERT. Keeps cells alive by suppressing p53/TP53 under normal conditions, but stimulates apoptosis by repressing CDKN1A under stress conditions. Acts as a negative regulator of telomerase. Has negative and positive effects on RNA polymerase II-dependent transcription. The polypeptide is E3 ubiquitin-protein ligase makorin-1 (Mkrn1) (Mus musculus (Mouse)).